Here is a 936-residue protein sequence, read N- to C-terminus: E3 ubiquitin-protein ligase ZNRF3 (936 aa).

The interval 1-31 is disordered; the sequence is MRPRSGGRPGATGRRRRRLRRRPRGLRCSRL. The signal sequence occupies residues 1–55; the sequence is MRPRSGGRPGATGRRRRRLRRRPRGLRCSRLPPPPPLPLLLGLLLAAAGPGAARA. The segment covering 13–27 has biased composition (basic residues); the sequence is GRRRRRLRRRPRGLR. The Extracellular segment spans residues 56 to 219; it reads KETAFVEVVL…PRQPTEYFDM (164 aa). Residues 220 to 240 form a helical membrane-spanning segment; that stretch reads GIFLAFFVVVSLVCLILLVKI. The Cytoplasmic portion of the chain corresponds to 241-936; sequence KLKQRRSQNS…HSADSSSPGA (696 aa). An RING-type; atypical zinc finger spans residues 293–334; that stretch reads CAICLEKYIDGEELRVIPCTHRFHRKCVDPWLLQHHTCPHCR. Disordered stretches follow at residues 608-693, 739-758, 849-875, and 892-936; these read SEAG…SPGA, LYEGSGPAGGEPQSGSSQGL, THSLGSWGGTRGPDTPRPHRGLGATRE, and CPPE…SPGA. The segment covering 654-684 has biased composition (polar residues); it reads SGDQVSTCSLEMNYSSNSSLEHRGPNSSTSE. Positions 913 to 922 are enriched in low complexity; the sequence is ESSTTATEAA.

It belongs to the ZNRF3 family. In terms of assembly, interacts with LRP6, FZD4, FZD5, FZD6 and FZD8. Interacts with RSPO1; interaction promotes indirect interaction with LGR4 and membrane clearance of ZNRF3. Also interacts with RSPO2. Interacts with LMBR1L.

The protein resides in the cell membrane. The enzyme catalyses S-ubiquitinyl-[E2 ubiquitin-conjugating enzyme]-L-cysteine + [acceptor protein]-L-lysine = [E2 ubiquitin-conjugating enzyme]-L-cysteine + N(6)-ubiquitinyl-[acceptor protein]-L-lysine.. Its pathway is protein modification; protein ubiquitination. Negatively regulated by R-spondin proteins such as RSPO1: interaction with RSPO1 induces the indirect association between ZNRF3 and LGR4, promoting membrane clearance of ZNRF3. Functionally, E3 ubiquitin-protein ligase that acts as a negative regulator of the Wnt signaling pathway by mediating the ubiquitination and subsequent degradation of Wnt receptor complex components Frizzled and LRP6. Acts on both canonical and non-canonical Wnt signaling pathway. Acts as a tumor suppressor in the intestinal stem cell zone by inhibiting the Wnt signaling pathway, thereby restricting the size of the intestinal stem cell zone. Along with RSPO2 and RNF43, constitutes a master switch that governs limb specification. The chain is E3 ubiquitin-protein ligase ZNRF3 (ZNRF3) from Homo sapiens (Human).